Here is a 275-residue protein sequence, read N- to C-terminus: Holocytochrome c-type synthase (275 aa).

2 disordered regions span residues 1-59 (MGLS…KTNS) and 83-102 (KENLDPSNLMPPPNQTPAPD). The N-myristoyl glycine moiety is linked to residue G2. Residues 9–28 (AASTVQTSTPAASDHQTAAP) show a composition bias toward polar residues. HRM repeat units lie at residues 31-36 (GCPMHE) and 41-46 (GCPVSA). A compositionally biased stretch (polar residues) spans 48 to 59 (PSDSTCGSKTNS). The segment covering 91 to 102 (LMPPPNQTPAPD) has biased composition (pro residues).

This sequence belongs to the cytochrome c-type heme lyase family.

The protein resides in the mitochondrion inner membrane. It localises to the membrane. The catalysed reaction is holo-[cytochrome c] = apo-[cytochrome c] + heme b. Lyase that catalyzes the covalent linking of the heme group to the cytochrome C apoprotein to produce the mature functional cytochrome. The chain is Holocytochrome c-type synthase from Bos taurus (Bovine).